Reading from the N-terminus, the 146-residue chain is DNA-directed RNA polymerase subunit beta (146 aa).

It belongs to the RNA polymerase beta chain family. In terms of assembly, the RNAP catalytic core consists of 2 alpha, 1 beta, 1 beta' and 1 omega subunit. When a sigma factor is associated with the core the holoenzyme is formed, which can initiate transcription.

The catalysed reaction is RNA(n) + a ribonucleoside 5'-triphosphate = RNA(n+1) + diphosphate. Its function is as follows. DNA-dependent RNA polymerase catalyzes the transcription of DNA into RNA using the four ribonucleoside triphosphates as substrates. In Liberibacter africanus (Citrus greening disease), this protein is DNA-directed RNA polymerase subunit beta (rpoB).